The primary structure comprises 252 residues: Redox-sensing transcriptional repressor Rex (252 aa).

The segment at residues 26 to 65 (LYLRALTALSERSVPTVSSEELAAAAGVNSAKLRKDFSYL) is a DNA-binding region (H-T-H motif). 100 to 105 (GIGNLG) contacts NAD(+). Positions 222-252 (EAAAEGAIPAAASKESADKGPDGDVPAVMPA) are disordered.

This sequence belongs to the transcriptional regulatory Rex family. In terms of assembly, homodimer.

Its subcellular location is the cytoplasm. Modulates transcription in response to changes in cellular NADH/NAD(+) redox state. This chain is Redox-sensing transcriptional repressor Rex, found in Streptomyces avermitilis (strain ATCC 31267 / DSM 46492 / JCM 5070 / NBRC 14893 / NCIMB 12804 / NRRL 8165 / MA-4680).